The sequence spans 468 residues: Charged multivesicular body protein 7 (468 aa).

Coiled coils occupy residues 233-303 (EKLL…AETD) and 353-379 (VSDA…MIVD). Residues 428 to 468 (DVPSGPVVISPQRPTEWKTDQASRSPADGSFSRSVPEPVLQ) are disordered.

This sequence belongs to the SNF7 family.

Its subcellular location is the cytoplasm. The protein resides in the nucleus envelope. Functionally, ESCRT-III-like protein required to recruit the ESCRT-III complex to the nuclear envelope during late anaphase. Together with SPAST, the ESCRT-III complex promotes nuclear envelope sealing and mitotic spindle disassembly during late anaphase. Plays a role in the endosomal sorting pathway. This is Charged multivesicular body protein 7 (chmp7) from Xenopus tropicalis (Western clawed frog).